Reading from the N-terminus, the 314-residue chain is Olfactory receptor 8U9 (314 aa).

The Extracellular portion of the chain corresponds to 1-25 (MAQINCTQVTEFILVGLTDREELKM). Residue Asn-5 is glycosylated (N-linked (GlcNAc...) asparagine). Residues 26 to 46 (PLFVVFLSIYLFTTLGNLGLI) form a helical membrane-spanning segment. At 47 to 54 (LVIRTDAR) the chain is on the cytoplasmic side. Residues 55–75 (LHTPMYFFLSNLAFVDFCYSS) form a helical membrane-spanning segment. Over 76 to 99 (VITPKMLGNFLYKQNMISFNACAA) the chain is Extracellular. The cysteines at positions 97 and 189 are disulfide-linked. Residues 100-120 (QLGCFLAFMTAECLLLASMAY) traverse the membrane as a helical segment. The Cytoplasmic segment spans residues 121–133 (DRYVAICNPLLYM). A helical membrane pass occupies residues 134 to 154 (VLMSPGICFQLVAAPYSYSFL). At 155 to 196 (VALFHAILTFRLCYCHSNAINHFYCDDMPLLRLTCSDTHSKQ) the chain is on the extracellular side. The chain crosses the membrane as a helical span at residues 197 to 217 (LWIFVCAGIMFISSLLIVFIS). At 218–237 (YTFIISAILRMRSAEGRRKA) the chain is on the cytoplasmic side. Residues 238 to 258 (FSTCGSHMLAVTIFYGTLIFM) form a helical membrane-spanning segment. Over 259 to 271 (YLQPSSNHSLDTD) the chain is Extracellular. Asn-265 carries an N-linked (GlcNAc...) asparagine glycan. The chain crosses the membrane as a helical span at residues 272–292 (KMASVFYTVIIPMLNPLIYSL). At 293–314 (RNKEVKDALKKLIASKNQMLSS) the chain is on the cytoplasmic side.

Belongs to the G-protein coupled receptor 1 family.

It localises to the cell membrane. Potential odorant receptor. This is Olfactory receptor 8U9 from Mus musculus (Mouse).